Consider the following 685-residue polypeptide: Frizzled-8 (685 aa).

The signal sequence occupies residues 1–27; it reads MEWGYLLEVTSLLAALAVLQRSSGAAA. Topologically, residues 28–272 are extracellular; sequence ASAKELACQE…NPFFSQDERA (245 aa). Residues 30-151 form the FZ domain; sequence AKELACQEIT…GNPDTLCMDY (122 aa). Cystine bridges form between cysteine 35–cysteine 96, cysteine 43–cysteine 89, cysteine 80–cysteine 118, cysteine 107–cysteine 148, and cysteine 111–cysteine 135. Asparagine 49 carries an N-linked (GlcNAc...) asparagine glycan. 71 to 78 serves as a coordination point for hexadecanoate; it reads QFWPLVEI. Residues 95-100 form a wnt-binding region; it reads ICLEDY. Residues 147–152 form a wnt-binding region; sequence LCMDYN. Asparagine 152 is a glycosylation site (N-linked (GlcNAc...) asparagine). Residues 155-223 form a disordered region; it reads DLTTAAPSPP…KARPPGGGAA (69 aa). The segment covering 161–176 has biased composition (pro residues); that stretch reads PSPPRRLPPPPPPGEQ. Composition is skewed to low complexity over residues 177 to 187 and 200 to 223; these read PPSGSGHSRPP and GSGD…GGAA. The helical transmembrane segment at 273 to 293 threads the bilayer; the sequence is FTVFWIGLWSVLCFVSTFATV. Over 294 to 309 the chain is Cytoplasmic; sequence STFLIDMERFKYPERP. A helical transmembrane segment spans residues 310–330; the sequence is IIFLSACYLFVSVGYLVRLVA. Topologically, residues 331–394 are extracellular; it reads GHEKVACSGG…RYETTGPALC (64 aa). The chain crosses the membrane as a helical span at residues 395–415; the sequence is TVVFLLVYFFGMASSIWWVIL. At 416–437 the chain is on the cytoplasmic side; the sequence is SLTWFLAAGMKWGNEAIAGYSQ. The helical transmembrane segment at 438 to 458 threads the bilayer; it reads YFHLAAWLVPSVKSIAVLALS. Residues 459-481 are Extracellular-facing; it reads SVDGDPVAGICYVGNQSLDNLRG. An N-linked (GlcNAc...) asparagine glycan is attached at asparagine 473. The helical transmembrane segment at 482–502 threads the bilayer; it reads FVLAPLVIYLFIGTMFLLAGF. Over 503–530 the chain is Cytoplasmic; that stretch reads VSLFRIRSVIKQQGGPTKTHKLEKLMIR. The helical transmembrane segment at 531 to 551 threads the bilayer; the sequence is LGLFTVLYTVPAAVVVACLFY. Over 552-582 the chain is Extracellular; the sequence is EQHNRPRWEATHNCPCLRDLQPDQARRPDYA. The helical transmembrane segment at 583–603 threads the bilayer; the sequence is VFMLKYFMCLVVGITSGVWVW. Over 604–685 the chain is Cytoplasmic; the sequence is SGKTLESWRA…YPKQMPLSQV (82 aa). The Lys-Thr-X-X-X-Trp motif, mediates interaction with the PDZ domain of Dvl family members motif lies at 606–611; that stretch reads KTLESW. A compositionally biased stretch (gly residues) spans 631-655; it reads AGGSGPGGSGPGPGGGGGHGGGGGS. A disordered region spans residues 631-656; that stretch reads AGGSGPGGSGPGPGGGGGHGGGGGSL. The short motif at 683–685 is the PDZ-binding element; the sequence is SQV.

It belongs to the G-protein coupled receptor Fz/Smo family. As to quaternary structure, component of a Wnt-signaling complex that contains a WNT protein, a FZD protein and LRP5 or LRP6. Interacts directly with LRP5 or LRP6; the interaction is promoted by Wnt-binding and signaling and inhibited by DKK1. Interacts (via the PDZ-binding motif) with GPOC (via its PDZ domain). Interacts with RSPO1 and RSPO3. Interacts with glypican GPC3. Post-translationally, ubiquitinated by ZNRF3, leading to its degradation by the proteasome. As to expression, expressed in chondrocytes.

It localises to the membrane. The protein resides in the golgi apparatus. Its subcellular location is the cell membrane. Its function is as follows. Receptor for Wnt proteins. Component of the Wnt-Fzd-LRP5-LRP6 complex that triggers beta-catenin signaling through inducing aggregation of receptor-ligand complexes into ribosome-sized signalosomes. The beta-catenin canonical signaling pathway leads to the activation of disheveled proteins, inhibition of GSK-3 kinase, nuclear accumulation of beta-catenin and activation of Wnt target genes. A second signaling pathway involving PKC and calcium fluxes has been seen for some family members, but it is not yet clear if it represents a distinct pathway or if it can be integrated in the canonical pathway, as PKC seems to be required for Wnt-mediated inactivation of GSK-3 kinase. Both pathways seem to involve interactions with G-proteins. May be involved in transduction and intercellular transmission of polarity information during tissue morphogenesis and/or in differentiated tissues. Coreceptor along with RYK of Wnt proteins, such as WNT1. The polypeptide is Frizzled-8 (Fzd8) (Mus musculus (Mouse)).